Reading from the N-terminus, the 469-residue chain is MSITLLCLIKGNTLANAFPVDIDKDQLVGHLKKVIKAEQPQTFANVDAKDLKLWRVPISDDHDDQLRNLSLEDSDELLAIRKISKYFPDSPPEECIHVLVEPPESTATSEVLKLREEVASLQALLNKSVAFDVVVSPKRTKGFKWTVNIEQATLDGLKEHIRKMEKPPALENDGAVLNIVNESGKYSPLNDQDLREMLQLFVSNKNLKFTVFIETPSKAFSDWTFSSVCQLYGLNGETEDPTMTVFPNFSCGNVKPSQESLEGLMAELKSRLDNTPISLLSVEATKSLYVYSYLLAGANNFKGKFEIRPQKVISGPNGHGPLDFAIDLCQTAKTVGVTEVKKDDFVKGVAQCAVQLESSLSYRKRKADEMEERTFGRVFGIVTDAEKFYFMECSMDDQDRPSFKLSKPVTVVYEDNDLQTKVEKVLEHIVWLLEEAQKPDSALDVKEREIKRVRSGELPKVTDLEGKTN.

An N-terminal signal peptide occupies residues 1–17; it reads MSITLLCLIKGNTLANA. Residues 18–57 form an LQLFLAK-like domain region; that stretch reads FPVDIDKDQLVGHLKKVIKAEQPQTFANVDAKDLKLWRVP. The segment at 58–96 is DWL domain; sequence ISDDHDDQLRNLSLEDSDELLAIRKISKYFPDSPPEECI. A glycan (N-linked (GlcNAc...) asparagine) is linked at N68. Residues 97–103 carry the HVLVXXP motif motif; that stretch reads HVLVEPP. N126, N181, and N248 each carry an N-linked (GlcNAc...) asparagine glycan.

This sequence belongs to the Crinkler effector family. Homodimer.

It is found in the secreted. The protein localises to the host nucleus. Effector that participates in the arbuscule development step of the symbiosis. Arbuscular mycorrhizal (AM) symbiosis is one of the most prominent and beneficial plant-microbe interactions that facilitates mineral nutrition and confers tolerance to biotic and abiotic stresses. Is not involved in cell death processes. This chain is Crinkler effector protein 1, found in Rhizophagus irregularis (strain DAOM 181602 / DAOM 197198 / MUCL 43194) (Arbuscular mycorrhizal fungus).